The following is a 60-amino-acid chain: Ixodegrin-like peptide (60 aa).

The signal sequence occupies residues 1–21 (MNAAFIAALLILGALTLDAMA). The Cell attachment site signature appears at 49 to 51 (RGD).

Belongs to the ixodegrin family. In terms of processing, contains 3 disulfide bonds. In terms of tissue distribution, expressed in salivary glands.

The protein resides in the secreted. Tick salivary platelet aggregation inhibitor that plays an important part in the anti-hemostatic strategy of ticks. Inhibits platelet aggregation induced by ADP, thrombin and thromboxane A2 (TXA2). Blocks platelet adhesion to soluble collagen (most probably through the binding to alpha-2/beta-1 integrin (ITGA2/ITGB1)) and binds to purified glycoprotein IIb/IIIa (ITGA2B/ITGB3) in a dose-dependent manner. In vivo, reduces thrombus weight effectively in a rat arteriovenous shunt model and inhibits thrombosis in a carrageenan-induced mouse tail thrombosis model. The polypeptide is Ixodegrin-like peptide (Ixodes scapularis (Black-legged tick)).